The chain runs to 1178 residues: DNA-directed RNA polymerase I subunit 2 (1178 aa).

Residues 1097 to 1137 (CSLCGSLLTSSVVNVQQKKLIQEIGKLPPGRTPKKVTCYSC) form a C4-type zinc finger.

The protein belongs to the RNA polymerase beta chain family. As to quaternary structure, component of the RNA polymerase I (Pol I) complex consisting of at least 13 subunits.

It is found in the nucleus. The enzyme catalyses RNA(n) + a ribonucleoside 5'-triphosphate = RNA(n+1) + diphosphate. Functionally, DNA-dependent RNA polymerase catalyzes the transcription of DNA into RNA using the four ribonucleoside triphosphates as substrates. Second largest core component of RNA polymerase I which synthesizes ribosomal RNA precursors. Proposed to contribute to the polymerase catalytic activity and forms the polymerase active center together with the largest subunit. Pol I is composed of mobile elements and NRPA2 is part of the core element with the central large cleft and probably a clamp element that moves to open and close the cleft. Essential for the completion of the three rounds of mitosis in female megaspores required for the development of mature gametophytes. This Arabidopsis thaliana (Mouse-ear cress) protein is DNA-directed RNA polymerase I subunit 2.